The primary structure comprises 506 residues: ATP synthase subunit alpha, plastid (506 aa).

Residue 170–177 coordinates ATP; sequence GDRQTGKT.

The protein belongs to the ATPase alpha/beta chains family. F-type ATPases have 2 components, CF(1) - the catalytic core - and CF(0) - the membrane proton channel. CF(1) has five subunits: alpha(3), beta(3), gamma(1), delta(1), epsilon(1). CF(0) has four main subunits: a, b, b' and c.

It is found in the plastid membrane. It carries out the reaction ATP + H2O + 4 H(+)(in) = ADP + phosphate + 5 H(+)(out). Functionally, produces ATP from ADP in the presence of a proton gradient across the membrane. The alpha chain is a regulatory subunit. This chain is ATP synthase subunit alpha, plastid, found in Prototheca wickerhamii.